Here is a 118-residue protein sequence, read N- to C-terminus: MTHAHITTWVVALILFVVAIALQAKGHEKTKMLHMLLRLFYILIIATGAWILHSMSSFPFLYIVKVIVGLWVIGTMEMILVRTAKGKNTNVLWLQFIVAFVVVLYLGFKLPFGFSFFS.

The next 4 helical transmembrane spans lie at 4–24, 32–52, 60–80, and 96–116; these read AHITTWVVALILFVVAIALQA, MLHMLLRLFYILIIATGAWIL, FLYIVKVIVGLWVIGTMEMIL, and FIVAFVVVLYLGFKLPFGFSF.

This sequence belongs to the UPF0344 family.

It is found in the cell membrane. The sequence is that of UPF0344 protein Aflv_2205 from Anoxybacillus flavithermus (strain DSM 21510 / WK1).